The chain runs to 37 residues: Photosystem II reaction center protein Psb30 (37 aa).

Residues 10–30 (LISLLLLTLIMLAGPAVIALW) traverse the membrane as a helical segment.

It belongs to the Psb30/Ycf12 family. In terms of assembly, PSII is composed of 1 copy each of membrane proteins PsbA, PsbB, PsbC, PsbD, PsbE, PsbF, PsbH, PsbI, PsbJ, PsbK, PsbL, PsbM, PsbT, PsbX, Psb30/Ycf12, peripheral proteins PsbO, CyanoQ (PsbQ), PsbU, PsbV and a large number of cofactors. It forms dimeric complexes.

The protein localises to the cell inner membrane. A core subunit of photosystem II (PSII), probably helps stabilize the reaction center. The sequence is that of Photosystem II reaction center protein Psb30 from Gloeobacter violaceus (strain ATCC 29082 / PCC 7421).